The sequence spans 602 residues: Probable pectinesterase/pectinesterase inhibitor 64 (602 aa).

Residues Ile-36–Ala-56 form a helical membrane-spanning segment. Residues Ser-62 to Ala-91 form a disordered region. A compositionally biased stretch (pro residues) spans Pro-81–Ile-90. The pectinesterase inhibitor 64 stretch occupies residues Pro-87–Met-237. Asn-98, Asn-156, Asn-212, Asn-229, and Asn-315 each carry an N-linked (GlcNAc...) asparagine glycan. Positions Asp-288–Asp-595 are pectinesterase 64. Substrate is bound by residues Thr-367 and Gln-397. Asp-420 functions as the Proton donor; for pectinesterase activity in the catalytic mechanism. A disulfide bond links Cys-434 and Cys-454. Catalysis depends on Asp-441, which acts as the Nucleophile; for pectinesterase activity. 2 N-linked (GlcNAc...) asparagine glycosylation sites follow: Asn-492 and Asn-496. Substrate-binding residues include Arg-518 and Trp-520.

It in the N-terminal section; belongs to the PMEI family. This sequence in the C-terminal section; belongs to the pectinesterase family. As to expression, expressed in siliques.

It localises to the membrane. The enzyme catalyses [(1-&gt;4)-alpha-D-galacturonosyl methyl ester](n) + n H2O = [(1-&gt;4)-alpha-D-galacturonosyl](n) + n methanol + n H(+). It functions in the pathway glycan metabolism; pectin degradation; 2-dehydro-3-deoxy-D-gluconate from pectin: step 1/5. Functionally, acts in the modification of cell walls via demethylesterification of cell wall pectin. The protein is Probable pectinesterase/pectinesterase inhibitor 64 (PME64) of Arabidopsis thaliana (Mouse-ear cress).